A 258-amino-acid polypeptide reads, in one-letter code: Thiazole synthase (258 aa).

Catalysis depends on Lys-98, which acts as the Schiff-base intermediate with DXP. 1-deoxy-D-xylulose 5-phosphate contacts are provided by residues Gly-159, 185–186 (AG), and 207–208 (NT).

The protein belongs to the ThiG family. As to quaternary structure, homotetramer. Forms heterodimers with either ThiH or ThiS.

It localises to the cytoplasm. The enzyme catalyses [ThiS sulfur-carrier protein]-C-terminal-Gly-aminoethanethioate + 2-iminoacetate + 1-deoxy-D-xylulose 5-phosphate = [ThiS sulfur-carrier protein]-C-terminal Gly-Gly + 2-[(2R,5Z)-2-carboxy-4-methylthiazol-5(2H)-ylidene]ethyl phosphate + 2 H2O + H(+). The protein operates within cofactor biosynthesis; thiamine diphosphate biosynthesis. In terms of biological role, catalyzes the rearrangement of 1-deoxy-D-xylulose 5-phosphate (DXP) to produce the thiazole phosphate moiety of thiamine. Sulfur is provided by the thiocarboxylate moiety of the carrier protein ThiS. In vitro, sulfur can be provided by H(2)S. This is Thiazole synthase from Bacillus cereus (strain ATCC 14579 / DSM 31 / CCUG 7414 / JCM 2152 / NBRC 15305 / NCIMB 9373 / NCTC 2599 / NRRL B-3711).